A 203-amino-acid polypeptide reads, in one-letter code: MVLGLFSIIFSFSRKCHYASRMLLVSFLLDMAVRAMTSHINICSKLGAELNDFAVFTTFGLASALLLGVDGLLSGILAIIYVSAASFHLCFYSPGVPSTYKGLPCPYASCILASTSLLTKGNRFILCCMASLMILFMMDQSYYPYDKILESENWKKLVYIGGVIMLFFSPLSLSAFYCLMWSLSYIFFPDALWGKAACLSPQH.

A run of 3 helical transmembrane segments spans residues 60-80 (GLASALLLGVDGLLSGILAII), 124-144 (FILCCMASLMILFMMDQSYYP), and 157-177 (LVYIGGVIMLFFSPLSLSAFY).

It localises to the membrane. The protein is Transmembrane protein 269 of Homo sapiens (Human).